A 119-amino-acid polypeptide reads, in one-letter code: Fluoride-specific ion channel FluC (119 aa).

4 helical membrane-spanning segments follow: residues 5 to 25 (ILPL…LNLA), 30 to 50 (LSPA…IGIF), 59 to 79 (WKLL…GFSL), and 92 to 112 (SALA…WLGL). Residues Gly69 and Thr72 each coordinate Na(+).

The protein belongs to the fluoride channel Fluc/FEX (TC 1.A.43) family.

It localises to the cell inner membrane. It catalyses the reaction fluoride(in) = fluoride(out). Na(+) is not transported, but it plays an essential structural role and its presence is essential for fluoride channel function. Its function is as follows. Fluoride-specific ion channel. Important for reducing fluoride concentration in the cell, thus reducing its toxicity. This Neisseria gonorrhoeae (strain NCCP11945) protein is Fluoride-specific ion channel FluC.